Reading from the N-terminus, the 513-residue chain is Bifunctional purine biosynthesis protein PurH (513 aa).

In terms of domain architecture, MGS-like spans 1–145; that stretch reads MTKRALISVS…KNYQDVTAVV (145 aa).

Belongs to the PurH family.

The enzyme catalyses (6R)-10-formyltetrahydrofolate + 5-amino-1-(5-phospho-beta-D-ribosyl)imidazole-4-carboxamide = 5-formamido-1-(5-phospho-D-ribosyl)imidazole-4-carboxamide + (6S)-5,6,7,8-tetrahydrofolate. It catalyses the reaction IMP + H2O = 5-formamido-1-(5-phospho-D-ribosyl)imidazole-4-carboxamide. It functions in the pathway purine metabolism; IMP biosynthesis via de novo pathway; 5-formamido-1-(5-phospho-D-ribosyl)imidazole-4-carboxamide from 5-amino-1-(5-phospho-D-ribosyl)imidazole-4-carboxamide (10-formyl THF route): step 1/1. The protein operates within purine metabolism; IMP biosynthesis via de novo pathway; IMP from 5-formamido-1-(5-phospho-D-ribosyl)imidazole-4-carboxamide: step 1/1. In Enterococcus faecalis (strain ATCC 700802 / V583), this protein is Bifunctional purine biosynthesis protein PurH.